The following is a 779-amino-acid chain: Subtilisin-like protease SBT3.18 (779 aa).

The N-terminal stretch at 1–21 is a signal peptide; it reads MYFWVMFFTLMIKVKLYITNG. The propeptide at 22 to 109 is activation peptide; sequence DIFQNRPTVY…VFKSKSLKLH (88 aa). The Inhibitor I9 domain occupies 30 to 109; the sequence is VYVVYLGANR…VFKSKSLKLH (80 aa). N84 carries an N-linked (GlcNAc...) asparagine glycan. The 509-residue stretch at 113–621 folds into the Peptidase S8 domain; sequence SWDFLGLAVD…AGHINPLKAM (509 aa). Active-site charge relay system residues include D144 and H221. Residues N236 and N406 are each glycosylated (N-linked (GlcNAc...) asparagine). S553 (charge relay system) is an active-site residue.

It belongs to the peptidase S8 family.

The protein resides in the secreted. In Arabidopsis thaliana (Mouse-ear cress), this protein is Subtilisin-like protease SBT3.18.